The sequence spans 427 residues: Putative dipeptidase MCYG_02918 (427 aa).

Residues 1 to 29 (MAPERRSRLSDAGILVSLLALTSLVPVQA) form the signal peptide. Residues histidine 55, aspartate 57, and glutamate 167 each coordinate Zn(2+). Cysteine 106 and cysteine 196 are oxidised to a cystine. Histidine 194 is a substrate binding site. Histidine 238 and histidine 259 together coordinate Zn(2+). Substrate is bound by residues arginine 270 and aspartate 330. A glycan (N-linked (GlcNAc...) asparagine) is linked at asparagine 402.

It belongs to the metallo-dependent hydrolases superfamily. Peptidase M19 family. Requires Zn(2+) as cofactor.

The enzyme catalyses an L-aminoacyl-L-amino acid + H2O = 2 an L-alpha-amino acid. In terms of biological role, hydrolyzes a wide range of dipeptides. This chain is Putative dipeptidase MCYG_02918, found in Arthroderma otae (strain ATCC MYA-4605 / CBS 113480) (Microsporum canis).